We begin with the raw amino-acid sequence, 93 residues long: Ubiquinol-cytochrome-c reductase complex assembly factor 3 (93 aa).

Residues 1-7 are Mitochondrial matrix-facing; it reads MDSLRKM. A helical transmembrane segment spans residues 8–28; the sequence is LISVAMLGAGAGVGYALLVIV. The interval 23–80 is mediates lipid-binding; it reads ALLVIVTPGERRKQEMLKEMPLQDPRSREEAARTQQLLLATLQEAATTQENVAWRKNW. At 29–93 the chain is on the mitochondrial intermembrane side; the sequence is TPGERRKQEM…GEGGAGGRSP (65 aa).

This sequence belongs to the UQCC3 family. Associates with the ubiquinol-cytochrome c reductase complex (mitochondrial respiratory chain complex III or cytochrome b-c1 complex). Interacts with UQCC1. Forms a complex, named COMC, composed of UQCC1, UQCC2; UQCC3 and UQCC4; mediates MT-CYB hemylation and association with the first nuclear-encoded complex III subunit UQCRQ. In terms of processing, probably cleaved by OMA1 under mitochondrial stress conditions.

Its subcellular location is the mitochondrion inner membrane. Functionally, required for the assembly of the ubiquinol-cytochrome c reductase complex (mitochondrial respiratory chain complex III or cytochrome b-c1 complex), mediating cytochrome b recruitment and probably stabilization within the complex. Thereby, plays an important role in ATP production by mitochondria. Cardiolipin-binding protein, it may also control the cardiolipin composition of mitochondria membranes and their morphology. This chain is Ubiquinol-cytochrome-c reductase complex assembly factor 3, found in Homo sapiens (Human).